Consider the following 423-residue polypeptide: Methanol:N,N-dimethyl-4-nitrosoaniline oxidoreductase (423 aa).

Belongs to the iron-containing alcohol dehydrogenase family. Homodecamer. It depends on Mg(2+) as a cofactor. Zn(2+) serves as cofactor. Requires NADPH as cofactor.

It catalyses the reaction methanol + A = formaldehyde + AH2. Catalyzes the oxidation of methanol to yield formaldehyde. While the in vivo electron acceptor is not known, N,N-dimethyl-4-nitrosoaniline (NDMA) can serve this function in vitro and is reduced to 4-(hydroxylamino)-N,N-dimethylaniline. This Rhodococcus erythropolis (Arthrobacter picolinophilus) protein is Methanol:N,N-dimethyl-4-nitrosoaniline oxidoreductase (thcE).